We begin with the raw amino-acid sequence, 371 residues long: Maltose/maltodextrin import ATP-binding protein MalK (371 aa).

Positions 4 to 234 (VTLKNVCKAY…PENRFVAGFI (231 aa)) constitute an ABC transporter domain. 36 to 43 (GPSGCGKS) is a binding site for ATP.

Belongs to the ABC transporter superfamily. Maltooligosaccharide importer (TC 3.A.1.1.1) family. In terms of assembly, the complex is composed of two ATP-binding proteins (MalK), two transmembrane proteins (MalG and MalK) and a solute-binding protein (MalE).

It localises to the cell inner membrane. The catalysed reaction is D-maltose(out) + ATP + H2O = D-maltose(in) + ADP + phosphate + H(+). In terms of biological role, part of the ABC transporter complex MalEFGK involved in maltose/maltodextrin import. Responsible for energy coupling to the transport system. This is Maltose/maltodextrin import ATP-binding protein MalK from Vibrio vulnificus (strain CMCP6).